Here is a 131-residue protein sequence, read N- to C-terminus: Agouti-related protein (131 aa).

Residues 1-20 (MLTAMLLSCVLLLALPPTLG) form the signal peptide. The propeptide occupies 21 to 81 (VQMGVAPLKG…VLDPQNRESR (61 aa)). 5 disulfides stabilise this stretch: Cys86-Cys101, Cys93-Cys107, Cys100-Cys118, Cys104-Cys128, and Cys109-Cys116. An Agouti domain is found at 86 to 128 (CVRLHESCLGQQVPCCDPCATCYCRFFNAFCYCRKLGTATNLC). The interaction with melanocortin receptors stretch occupies residues 110 to 112 (RFF).

Interacts with melanocortin receptors MC3R, MC4R and MC5R. Expressed in arcuate nucleus and median eminence, adrenal gland (medulla), hypothalamus, testis, and lung.

It is found in the secreted. Its subcellular location is the golgi apparatus lumen. Functionally, plays a role in weight homeostasis. Involved in the control of feeding behavior through the central melanocortin system. Acts as alpha melanocyte-stimulating hormone antagonist by inhibiting cAMP production mediated by stimulation of melanocortin receptors within the hypothalamus and adrenal gland. Has very low activity with MC5R. Is an inverse agonist for MC3R and MC4R being able to suppress their constitutive activity. It promotes MC3R and MC4R endocytosis in an arrestin-dependent manner. The sequence is that of Agouti-related protein (Agrp) from Mus musculus (Mouse).